Consider the following 75-residue polypeptide: UPF0270 protein PSPPH_1506 (75 aa).

This sequence belongs to the UPF0270 family.

This is UPF0270 protein PSPPH_1506 from Pseudomonas savastanoi pv. phaseolicola (strain 1448A / Race 6) (Pseudomonas syringae pv. phaseolicola (strain 1448A / Race 6)).